Reading from the N-terminus, the 346-residue chain is MEISTDALIAISIIWGFVFIYAVMATMDFGAGFWSMIYLNKEHMKATDIANRFLSPTWEVTNVFIVAIVVALFSFFPGATFVLGTVLLIPGSMILLLLAIRSGFLVFSNTAKERKTLRYISGISGFIIPAILILVLPVTHGGFIEKTDGIYNLNMSKIFSSPNAYSFIGFAILSTLFLSSLLLADFSNVAEEQDAYRAYRKSALITGPISLLFAVCIMVTMRNEANWLYSGMMNDFSWIIASFITFVIAGIALFLPNKSFGQNIGKPRLALVAIGIQYFLASYAYGRAHLPYMIYPDVTVMSGFTEPATFRALFATYIVAFIILFPGFFFFWKMFMRDKRYIRQEE.

9 helical membrane passes run 7-27, 63-83, 87-107, 119-139, 164-184, 201-221, 236-256, 269-289, and 312-332; these read ALIAISIIWGFVFIYAVMATM, VFIVAIVVALFSFFPGATFVL, LLIPGSMILLLLAIRSGFLVF, YISGISGFIIPAILILVLPVT, AYSFIGFAILSTLFLSSLLLA, KSALITGPISLLFAVCIMVTM, FSWIIASFITFVIAGIALFLP, LALVAIGIQYFLASYAYGRAH, and ALFATYIVAFIILFPGFFFFW.

It belongs to the cytochrome ubiquinol oxidase subunit 2 family.

The protein resides in the cell membrane. Functionally, may have a role in sporulation. Can compensate for the loss of cytochrome aa3. This is Putative cytochrome bd menaquinol oxidase subunit II (ythB) from Bacillus subtilis (strain 168).